A 132-amino-acid chain; its full sequence is Phosphomevalonate dehydratase small subunit (132 aa).

Catalysis depends on serine 58, which acts as the Proton acceptor.

Belongs to the AcnX type II small subunit family. In terms of assembly, heterodimer composed of a large subunit (PMDh-L) and a small subunit (PMDh-S).

It carries out the reaction (R)-5-phosphomevalonate = (2E)-3-methyl-5-phosphooxypent-2-enoate + H2O. The protein operates within isoprenoid biosynthesis; isopentenyl diphosphate biosynthesis via mevalonate pathway. Neither the addition of 1 mM Mg(2+) nor 1 mM Mn(2+) has a significant effect on the activity, whereas Zn(2+) causes almost complete inactivation. Strongly inhibited by H(2)O(2), but not by EDTA or iodoacetamide. Component of a hydro-lyase that catalyzes the dehydration of mevalonate 5-phosphate (MVA5P) to form trans-anhydromevalonate 5-phosphate (tAHMP). Involved in the archaeal mevalonate (MVA) pathway, which provides fundamental precursors for isoprenoid biosynthesis, such as isopentenyl diphosphate (IPP) and dimethylallyl diphosphate (DMAPP). This is Phosphomevalonate dehydratase small subunit from Aeropyrum pernix (strain ATCC 700893 / DSM 11879 / JCM 9820 / NBRC 100138 / K1).